The sequence spans 291 residues: UDP-N-acetylenolpyruvoylglucosamine reductase (291 aa).

In terms of domain architecture, FAD-binding PCMH-type spans 22–187 (RIGGPARYFK…ASATFQLTKD (166 aa)). Residue R166 is part of the active site. C214 serves as the catalytic Proton donor. The active site involves E283.

Belongs to the MurB family. It depends on FAD as a cofactor.

The protein localises to the cytoplasm. It catalyses the reaction UDP-N-acetyl-alpha-D-muramate + NADP(+) = UDP-N-acetyl-3-O-(1-carboxyvinyl)-alpha-D-glucosamine + NADPH + H(+). The protein operates within cell wall biogenesis; peptidoglycan biosynthesis. Its function is as follows. Cell wall formation. This is UDP-N-acetylenolpyruvoylglucosamine reductase from Chlamydia trachomatis serovar A (strain ATCC VR-571B / DSM 19440 / HAR-13).